A 523-amino-acid chain; its full sequence is UPF0329 protein ECU02_0050 (523 aa).

The segment at 326–386 (EEKAKSKKRG…KTGKKSEGGR (61 aa)) is disordered. The span at 330–339 (KSKKRGKRKS) shows a compositional bias: basic residues. Basic and acidic residues predominate over residues 344–353 (EAKEEEKKES). The span at 354–368 (ETEEVEAGEEVEMPS) shows a compositional bias: acidic residues.

The protein belongs to the UPF0329 family.

The polypeptide is UPF0329 protein ECU02_0050 (Encephalitozoon cuniculi (strain GB-M1) (Microsporidian parasite)).